Consider the following 345-residue polypeptide: Fe-S cluster assembly protein DRE2 (345 aa).

An N-terminal SAM-like domain region spans residues 29 to 163 (GDSGDRTLLL…KPDYAEQEVV (135 aa)). The tract at residues 164-237 (PLRFGAKKVN…EDTLLTEADL (74 aa)) is linker. Residues C247, C258, C261, and C263 each coordinate [2Fe-2S] cluster. Positions 247–263 (CAPQPGKKRRACKDCTC) are fe-S binding site A. [4Fe-4S] cluster contacts are provided by C308, C311, C319, and C322. 2 consecutive short sequence motifs (cx2C motif) follow at residues 308 to 311 (CNSC) and 319 to 322 (CADC). The fe-S binding site B stretch occupies residues 308–322 (CNSCYLGDAFRCADC).

Belongs to the anamorsin family. As to quaternary structure, monomer. Interacts with TAH18. Interacts with MIA40. The cofactor is [2Fe-2S] cluster. Requires [4Fe-4S] cluster as cofactor.

The protein localises to the cytoplasm. Its subcellular location is the mitochondrion intermembrane space. Functionally, component of the cytosolic iron-sulfur (Fe-S) protein assembly (CIA) machinery required for the maturation of extramitochondrial Fe-S proteins. Part of an electron transfer chain functioning in an early step of cytosolic Fe-S biogenesis, facilitating the de novo assembly of a [4Fe-4S] cluster on the scaffold complex CFD1-NBP35. Electrons are transferred to DRE2 from NADPH via the FAD- and FMN-containing protein TAH18. TAH18-DRE2 are also required for the assembly of the diferric tyrosyl radical cofactor of ribonucleotide reductase (RNR), probably by providing electrons for reduction during radical cofactor maturation in the catalytic small subunit RNR2. The protein is Fe-S cluster assembly protein DRE2 of Podospora anserina (strain S / ATCC MYA-4624 / DSM 980 / FGSC 10383) (Pleurage anserina).